A 212-amino-acid chain; its full sequence is Peptide methionine sulfoxide reductase MsrA (212 aa).

Cys52 is a catalytic residue.

It belongs to the MsrA Met sulfoxide reductase family.

It catalyses the reaction L-methionyl-[protein] + [thioredoxin]-disulfide + H2O = L-methionyl-(S)-S-oxide-[protein] + [thioredoxin]-dithiol. The catalysed reaction is [thioredoxin]-disulfide + L-methionine + H2O = L-methionine (S)-S-oxide + [thioredoxin]-dithiol. Its function is as follows. Has an important function as a repair enzyme for proteins that have been inactivated by oxidation. Catalyzes the reversible oxidation-reduction of methionine sulfoxide in proteins to methionine. The polypeptide is Peptide methionine sulfoxide reductase MsrA (Salmonella paratyphi A (strain AKU_12601)).